We begin with the raw amino-acid sequence, 1334 residues long: MEPAPELLFYVNGRKVVEKQVDPETMLLPYLRKKLRLTGTKYGCGGGGCGACTVMISRYNRVTKKIRHYPVNACLTPICSLYGAAVTTVEGIGSTTTRLHPVQERIAKFHGTQCGFCTPGMVMSMYALLRNHPEPTLDQLADALGGNLCRCTGYRPIIEAYKTFCKTSDCCQNKENGFCCLDQGINGLPEVEEENQTRPNLFSEEEYLPLDPTQELIFPPELMTMAEKQPQRTRVFSGERMMWISPVTLKALLEAKSTYPQAPVVMGNTSVGPGVKFKGIFHPVIISPDSIEELNVVSHTHSGLTLGAGLSLAQVKDILADVVQKVPEENAQTYRALLKHLGTLAGSQIRNMASLGGHIISRHLDSDLNPLLAVGNCTLNVLSKEGERQIPLDEQFLSRCPEADLKPQEILASVHIPYSRKWEFVLAFRQAQRKQNALAIVNSGMRVFFGEGDGIIRELAISYGGVGPTIICAKNSCQKLIGRSWNEEMLDTACRLILDEVSLPGSAPGGKVEFKRTLIISFLFKFYLEVSQILKRMAPGLSPHLADKYESALQDLHARYSWSTLKDQDVDARQLSQDPIGHPVMHLSGVKHATGEAIYLDDMPAVDQELFMAFVTSPRAHAKIVSTDLLEALSLPGVVDIVTAEHLQDGNTFYTEKLLAADEVLCVGQLVCAVIAESEVQAKQAAKQVKIVYEDLEPVILSIEEAIEQKSFFEPERKLEYGNVDEAFKVVDQILEGEIHMGGQEHFYMETQSVLVVPKGEDQEMDVYASTQFPKYIQDMVAAVLKLPVNKVMCHVKRVGGAFGGKVFKASIMAAIAAFAANKHGRAVRCILERGEDMLITGGRHPYLGKYKAGFMNDGRIVALDVEHYSNGGCSLDESLLVIEMGLLKMENAYKFPNLRCRGWACRTNLPSNTAFRGFGFPQAGLITECCITEVAAKCGLSPEKVRAINFYKEIDQTPYKQEINAKNLTQCWNECLAKSSYFQRKVAVEKFNAENYWKQRGLAIIPFKYPRGLGSVAYGQAAALVHVYLDGSVLVTHGGIEMGQGVHTKMIQVVSRELKMPMSNVHLRGTSTETVPNTNASGGSVVADLNGLAVKDACQTLLKRLEPIINKNPQGTWKEWAQAAFDKSISLSATGYFRGYDSNIDWDKGEGHPFEYFVYGAACSEVEIDCLTGDHKTIRTDIVMDVGYSINPALDIGQVEGAFIQGMGLYTIEELHYSPQGILYSRGPNQYKIPAICDIPAELNVTFLPPSEKSNTLYSSKGLGESGVFMGCSVFFAIREAVCAARQARGLSAPWKLSSPLTPEKIRMACEDKFTKMIPRDKPGSYVPWNVPV.

The region spanning 5-92 (PELLFYVNGR…GAAVTTVEGI (88 aa)) is the 2Fe-2S ferredoxin-type domain. The [2Fe-2S] cluster site is built by cysteine 44, cysteine 49, cysteine 52, and cysteine 74. Residue glutamine 113 participates in Mo-molybdopterin binding. Residues cysteine 114, cysteine 117, cysteine 149, and cysteine 151 each coordinate [2Fe-2S] cluster. Cysteine 151 contributes to the Mo-molybdopterin binding site. The FAD-binding PCMH-type domain maps to 236–421 (FSGERMMWIS…ASVHIPYSRK (186 aa)). Residues 264–271 (VVMGNTSV), alanine 345, serine 354, histidine 358, aspartate 367, and leucine 411 each bind FAD. Mo-molybdopterin is bound by residues 802 to 803 (AF) and methionine 1043. Residue serine 1064 is modified to Phosphoserine. Mo-molybdopterin is bound by residues 1084-1087 (GSVV), glutamine 1199, and leucine 1264. Glutamate 1266 acts as the Proton acceptor; for azaheterocycle hydroxylase activity in catalysis.

It belongs to the xanthine dehydrogenase family. As to quaternary structure, homodimer. [2Fe-2S] cluster serves as cofactor. It depends on FAD as a cofactor. The cofactor is Mo-molybdopterin. In terms of processing, the N-terminus is blocked. In terms of tissue distribution, very high expression in liver and lung. High expression in kidney, pancreas, brain stem and spinal cord. Moderate expression in heart, testis, eye, cerebral cortex and cerebellum. Low expression in stomach and muscle.

Its subcellular location is the cytoplasm. The catalysed reaction is an aldehyde + O2 + H2O = a carboxylate + H2O2 + H(+). It carries out the reaction retinal + O2 + H2O = retinoate + H2O2 + H(+). It catalyses the reaction all-trans-retinal + O2 + H2O = all-trans-retinoate + H2O2 + H(+). With respect to regulation, inhibited by hydralazine and menadione. Not inhibited by BOF-4272 or allopurinol, xanthine dehydrogenase potent inhibitors. In contrast to guinea pig, human and rat, isovanillin is not an inhibitor but a substrate for AOX1 in rabbit. Its function is as follows. Oxidase with broad substrate specificity, oxidizing aromatic azaheterocycles, such as N1-methylnicotinamide, N-methylphthalazinium and phthalazine, as well as aldehydes, such as benzaldehyde, retinal, pyridoxal, and vanillin. Plays a key role in the metabolism of xenobiotics and drugs containing aromatic azaheterocyclic substituents. Participates in the bioactivation of prodrugs such as famciclovir, catalyzing the oxidation step from 6-deoxypenciclovir to penciclovir, which is a potent antiviral agent. Is probably involved in the regulation of reactive oxygen species homeostasis. May be a prominent source of superoxide generation via the one-electron reduction of molecular oxygen. May also catalyze nitric oxide (NO) production via the reduction of nitrite to NO with NADH or aldehyde as electron donor. May play a role in adipogenesis. Cannot use hypoxanthine and all-trans-retinol as substrate. This Oryctolagus cuniculus (Rabbit) protein is Aldehyde oxidase 1.